A 538-amino-acid polypeptide reads, in one-letter code: Syncytin-1 (538 aa).

The N-terminal stretch at 1-20 (MALPYHIFLFTVLLPSFTLT) is a signal peptide. Residues 21-443 (APPPCRCMTS…NTGPWGLLSQ (423 aa)) are Extracellular-facing. An N-linked (GlcNAc...) asparagine glycan is attached at N169. The short motif at 186–189 (CWIC) is the CXXC element. 3 disulfide bridges follow: C186–C189, C186–C405, and C397–C404. N-linked (GlcNAc...) asparagine glycans are attached at residues N208, N214, N234, N242, and N281. Positions 320–340 (ILPFVIGAGVLGALGTGIGGI) are fusion peptide. Positions 380–396 (LQNRRALDLLTAERGGT) are immunosuppression. Residues 397–405 (CLFLGEECC) carry the CX6CC motif. An N-linked (GlcNAc...) asparagine glycan is attached at N409. The chain crosses the membrane as a helical span at residues 444–464 (WMPWILPFLGPLAAIILLLLF). Residues 465 to 484 (GPCIFNLLVNFVSSRIEAVK) are essential for the fusiogenic function. The Cytoplasmic segment spans residues 465–538 (GPCIFNLLVN…LLRPNSAGSS (74 aa)). A disordered region spans residues 496–538 (KIYRRPLDRPASPRSDVNDIKGTPPEEILTAQPLLRPNSAGSS).

It belongs to the gamma type-C retroviral envelope protein family. HERV class-I W env subfamily. The mature envelope protein (Env) consists of a trimer of SU-TM heterodimers attached probably by a labile interchain disulfide bond. Interacts with the C-type lectin CD209/DC-SIGN. Post-translationally, specific enzymatic cleavages in vivo yield mature proteins. Envelope glycoproteins are synthesized as an inactive precursor that is heavily N-glycosylated and processed likely by furin in the Golgi to yield the mature SU and TM proteins. The cleavage site between SU and TM requires the minimal sequence [KR]-X-[KR]-R. In terms of processing, the CXXC motif is highly conserved across a broad range of retroviral envelope proteins. It is thought to participate in the formation of a labile disulfide bond possibly with the CX6CC motif present in the transmembrane protein.

It localises to the cell membrane. The protein localises to the virion. Functionally, this endogenous retroviral envelope protein has retained its original fusogenic properties and participates in trophoblast fusion and the formation of a syncytium during placenta morphogenesis. May recognize and induce fusion through binding of SLC1A4 and SLC1A5. Endogenous envelope proteins may have kept, lost or modified their original function during evolution. Retroviral envelope proteins mediate receptor recognition and membrane fusion during early infection. The surface protein (SU) mediates receptor recognition, while the transmembrane protein (TM) acts as a class I viral fusion protein. The protein may have at least 3 conformational states: pre-fusion native state, pre-hairpin intermediate state, and post-fusion hairpin state. During viral and target cell membrane fusion, the coiled coil regions (heptad repeats) assume a trimer-of-hairpins structure, positioning the fusion peptide in close proximity to the C-terminal region of the ectodomain. The formation of this structure appears to drive apposition and subsequent fusion of membranes. This chain is Syncytin-1 (ERVW-1), found in Pan troglodytes (Chimpanzee).